The sequence spans 226 residues: Enolase-phosphatase E1 (226 aa).

It belongs to the HAD-like hydrolase superfamily. MasA/MtnC family. As to quaternary structure, monomer. The cofactor is Mg(2+).

The enzyme catalyses 5-methylsulfanyl-2,3-dioxopentyl phosphate + H2O = 1,2-dihydroxy-5-(methylsulfanyl)pent-1-en-3-one + phosphate. Its pathway is amino-acid biosynthesis; L-methionine biosynthesis via salvage pathway; L-methionine from S-methyl-5-thio-alpha-D-ribose 1-phosphate: step 3/6. It participates in amino-acid biosynthesis; L-methionine biosynthesis via salvage pathway; L-methionine from S-methyl-5-thio-alpha-D-ribose 1-phosphate: step 4/6. Bifunctional enzyme that catalyzes the enolization of 2,3-diketo-5-methylthiopentyl-1-phosphate (DK-MTP-1-P) into the intermediate 2-hydroxy-3-keto-5-methylthiopentenyl-1-phosphate (HK-MTPenyl-1-P), which is then dephosphorylated to form the acireductone 1,2-dihydroxy-3-keto-5-methylthiopentene (DHK-MTPene). This chain is Enolase-phosphatase E1, found in Shewanella sp. (strain MR-4).